Consider the following 338-residue polypeptide: Phosphatidylglycerol--prolipoprotein diacylglyceryl transferase (338 aa).

A run of 4 helical transmembrane segments spans residues 24–44, 67–87, 115–135, and 141–161; these read WYGLMYLVAFGIAYFLFSYQV, LFIWGILGLILGARIFGTLVY, GFQGMSYHGGFIGGFLGVILW, and FKFAAVADLMAVSIPLGYTFG. Arg-162 is an a 1,2-diacyl-sn-glycero-3-phospho-(1'-sn-glycerol) binding site. 3 helical membrane passes run 224–244, 252–272, and 304–324; these read PSQLYEAFFEGIILWLILWLL, GFLVCVYTLGYGFFRFFIEYF, and GQILCSLMILASLAAMLILYL.

It belongs to the Lgt family.

It localises to the cell inner membrane. It carries out the reaction L-cysteinyl-[prolipoprotein] + a 1,2-diacyl-sn-glycero-3-phospho-(1'-sn-glycerol) = an S-1,2-diacyl-sn-glyceryl-L-cysteinyl-[prolipoprotein] + sn-glycerol 1-phosphate + H(+). It participates in protein modification; lipoprotein biosynthesis (diacylglyceryl transfer). Catalyzes the transfer of the diacylglyceryl group from phosphatidylglycerol to the sulfhydryl group of the N-terminal cysteine of a prolipoprotein, the first step in the formation of mature lipoproteins. This Treponema denticola (strain ATCC 35405 / DSM 14222 / CIP 103919 / JCM 8153 / KCTC 15104) protein is Phosphatidylglycerol--prolipoprotein diacylglyceryl transferase.